Consider the following 161-residue polypeptide: NADH-quinone oxidoreductase subunit I (161 aa).

4Fe-4S ferredoxin-type domains lie at 52–82 (LRRYPDGEERCIACKLCEAICPAQAITIEAK) and 92–121 (TKYDIDMTKCIYCGLCQEACPVDAIVEGPN). [4Fe-4S] cluster contacts are provided by cysteine 62, cysteine 65, cysteine 68, cysteine 72, cysteine 101, cysteine 104, cysteine 107, and cysteine 111.

The protein belongs to the complex I 23 kDa subunit family. NDH-1 is composed of 14 different subunits. Subunits NuoA, H, J, K, L, M, N constitute the membrane sector of the complex. [4Fe-4S] cluster is required as a cofactor.

It is found in the cell inner membrane. It carries out the reaction a quinone + NADH + 5 H(+)(in) = a quinol + NAD(+) + 4 H(+)(out). Functionally, NDH-1 shuttles electrons from NADH, via FMN and iron-sulfur (Fe-S) centers, to quinones in the respiratory chain. The immediate electron acceptor for the enzyme in this species is believed to be ubiquinone. Couples the redox reaction to proton translocation (for every two electrons transferred, four hydrogen ions are translocated across the cytoplasmic membrane), and thus conserves the redox energy in a proton gradient. The polypeptide is NADH-quinone oxidoreductase subunit I (Orientia tsutsugamushi (strain Boryong) (Rickettsia tsutsugamushi)).